A 201-amino-acid chain; its full sequence is Holliday junction branch migration complex subunit RuvA (201 aa).

Positions 1-63 (MIAYLSGVVR…EDAQLLFGFP (63 aa)) are domain I. The segment at 64–142 (DADHLKLFDL…EHLAAAASGA (79 aa)) is domain II. Residues 143–150 (AGGKRPAR) form a flexible linker region. The interval 151–201 (VSSTAGHDAVDALLALGFREAQVRAAVAELLGADPEASADTLIRKALGRLR) is domain III.

The protein belongs to the RuvA family. Homotetramer. Forms an RuvA(8)-RuvB(12)-Holliday junction (HJ) complex. HJ DNA is sandwiched between 2 RuvA tetramers; dsDNA enters through RuvA and exits via RuvB. An RuvB hexamer assembles on each DNA strand where it exits the tetramer. Each RuvB hexamer is contacted by two RuvA subunits (via domain III) on 2 adjacent RuvB subunits; this complex drives branch migration. In the full resolvosome a probable DNA-RuvA(4)-RuvB(12)-RuvC(2) complex forms which resolves the HJ.

Its subcellular location is the cytoplasm. Functionally, the RuvA-RuvB-RuvC complex processes Holliday junction (HJ) DNA during genetic recombination and DNA repair, while the RuvA-RuvB complex plays an important role in the rescue of blocked DNA replication forks via replication fork reversal (RFR). RuvA specifically binds to HJ cruciform DNA, conferring on it an open structure. The RuvB hexamer acts as an ATP-dependent pump, pulling dsDNA into and through the RuvAB complex. HJ branch migration allows RuvC to scan DNA until it finds its consensus sequence, where it cleaves and resolves the cruciform DNA. This is Holliday junction branch migration complex subunit RuvA from Deinococcus radiodurans (strain ATCC 13939 / DSM 20539 / JCM 16871 / CCUG 27074 / LMG 4051 / NBRC 15346 / NCIMB 9279 / VKM B-1422 / R1).